A 299-amino-acid polypeptide reads, in one-letter code: Lathosterol oxidase (299 aa).

The next 3 helical transmembrane spans lie at 32–52 (ISLL…CATL), 79–99 (FTVK…LLEL), and 117–137 (IHLM…IYWI). In terms of domain architecture, Fatty acid hydroxylase spans 124 to 252 (VSFLFFTDML…YFTLWDRIGG (129 aa)). A Histidine box-1 motif is present at residues 138–143 (HRGLHH). Residues 151 to 155 (HKPHH) carry the Histidine box-2 motif. Residues 186-206 (VFPLHKVVYLGLYVLVNVWTI) traverse the membrane as a helical segment. Residues 228 to 233 (HHTDHH) carry the Histidine box-3 motif. Residue Ser-253 is modified to Phosphoserine. Residues 280–299 (FAENGCKGKKVGNGEFTKNK) form a disordered region.

The protein belongs to the sterol desaturase family. Fe cation is required as a cofactor.

Its subcellular location is the endoplasmic reticulum membrane. It catalyses the reaction a Delta(7)-sterol + 2 Fe(II)-[cytochrome b5] + O2 + 2 H(+) = a Delta(5),Delta(7)-sterol + 2 Fe(III)-[cytochrome b5] + 2 H2O. The catalysed reaction is lathosterol + 2 Fe(II)-[cytochrome b5] + O2 + 2 H(+) = 7-dehydrocholesterol + 2 Fe(III)-[cytochrome b5] + 2 H2O. The enzyme catalyses 5alpha-cholesta-7,24-dien-3beta-ol + 2 Fe(II)-[cytochrome b5] + O2 + 2 H(+) = 7-dehydrodesmosterol + 2 Fe(III)-[cytochrome b5] + 2 H2O. It participates in steroid biosynthesis; cholesterol biosynthesis. In terms of biological role, catalyzes the penultimate step of the biosynthesis of cholesterol, the dehydrogenation of lathosterol into 7-dehydrocholesterol (7-DHC). Cholesterol is the major sterol component in mammalian membranes and a precursor for bile acid and steroid hormone synthesis. In addition to its essential role in cholesterol biosynthesis, it also indirectly regulates ferroptosis through the production of 7-DHC. By diverting the spread of damage caused by peroxyl radicals from the phospholipid components to its sterol nucleus, 7-DHC prevents this form of cell death. This Mus musculus (Mouse) protein is Lathosterol oxidase.